Reading from the N-terminus, the 221-residue chain is 2-phospho-L-lactate guanylyltransferase (221 aa).

This sequence belongs to the CofC family. Homodimer.

It carries out the reaction (2S)-2-phospholactate + GTP + H(+) = (2S)-lactyl-2-diphospho-5'-guanosine + diphosphate. It functions in the pathway cofactor biosynthesis; coenzyme F420 biosynthesis. Guanylyltransferase that catalyzes the activation of (2S)-2-phospholactate (2-PL) as (2S)-lactyl-2-diphospho-5'-guanosine, via the condensation of 2-PL with GTP. It is involved in the biosynthesis of coenzyme F420, a hydride carrier cofactor. This chain is 2-phospho-L-lactate guanylyltransferase, found in Methanothrix thermoacetophila (strain DSM 6194 / JCM 14653 / NBRC 101360 / PT) (Methanosaeta thermophila).